The following is a 421-amino-acid chain: Eukaryotic translation initiation factor 3 subunit E (421 aa).

Positions 215–394 (FFQNDTKGKD…STVILNHPSV (180 aa)) constitute a PCI domain.

The protein belongs to the eIF-3 subunit E family. Component of the eukaryotic translation initiation factor 3 (eIF-3) complex.

The protein localises to the cytoplasm. Its function is as follows. Component of the eukaryotic translation initiation factor 3 (eIF-3) complex, which is involved in protein synthesis of a specialized repertoire of mRNAs and, together with other initiation factors, stimulates binding of mRNA and methionyl-tRNAi to the 40S ribosome. The eIF-3 complex specifically targets and initiates translation of a subset of mRNAs involved in cell proliferation. The sequence is that of Eukaryotic translation initiation factor 3 subunit E from Yarrowia lipolytica (strain CLIB 122 / E 150) (Yeast).